We begin with the raw amino-acid sequence, 341 residues long: S-adenosylmethionine:tRNA ribosyltransferase-isomerase (341 aa).

The protein belongs to the QueA family. In terms of assembly, monomer.

Its subcellular location is the cytoplasm. It catalyses the reaction 7-aminomethyl-7-carbaguanosine(34) in tRNA + S-adenosyl-L-methionine = epoxyqueuosine(34) in tRNA + adenine + L-methionine + 2 H(+). The protein operates within tRNA modification; tRNA-queuosine biosynthesis. Transfers and isomerizes the ribose moiety from AdoMet to the 7-aminomethyl group of 7-deazaguanine (preQ1-tRNA) to give epoxyqueuosine (oQ-tRNA). This chain is S-adenosylmethionine:tRNA ribosyltransferase-isomerase, found in Desulforamulus reducens (strain ATCC BAA-1160 / DSM 100696 / MI-1) (Desulfotomaculum reducens).